A 55-amino-acid chain; its full sequence is ATP synthase F(0) complex subunit 8 (55 aa).

Residues 4 to 24 form a helical membrane-spanning segment; it reads LNPAPWFAILVFSWLVFLTVI. Residues 36–55 are disordered; it reads EPTSQSTEKTKPEPWNWPWH.

It belongs to the ATPase protein 8 family. Component of the ATP synthase complex composed at least of ATP5F1A/subunit alpha, ATP5F1B/subunit beta, ATP5MC1/subunit c (homooctomer), MT-ATP6/subunit a, MT-ATP8/subunit 8, ATP5ME/subunit e, ATP5MF/subunit f, ATP5MG/subunit g, ATP5MK/subunit k, ATP5MJ/subunit j, ATP5F1C/subunit gamma, ATP5F1D/subunit delta, ATP5F1E/subunit epsilon, ATP5PF/subunit F6, ATP5PB/subunit b, ATP5PD/subunit d, ATP5PO/subunit OSCP. ATP synthase complex consists of a soluble F(1) head domain (subunits alpha(3) and beta(3)) - the catalytic core - and a membrane F(0) domain - the membrane proton channel (subunits c, a, 8, e, f, g, k and j). These two domains are linked by a central stalk (subunits gamma, delta, and epsilon) rotating inside the F1 region and a stationary peripheral stalk (subunits F6, b, d, and OSCP).

It localises to the mitochondrion membrane. Subunit 8, of the mitochondrial membrane ATP synthase complex (F(1)F(0) ATP synthase or Complex V) that produces ATP from ADP in the presence of a proton gradient across the membrane which is generated by electron transport complexes of the respiratory chain. ATP synthase complex consist of a soluble F(1) head domain - the catalytic core - and a membrane F(1) domain - the membrane proton channel. These two domains are linked by a central stalk rotating inside the F(1) region and a stationary peripheral stalk. During catalysis, ATP synthesis in the catalytic domain of F(1) is coupled via a rotary mechanism of the central stalk subunits to proton translocation. In vivo, can only synthesize ATP although its ATP hydrolase activity can be activated artificially in vitro. Part of the complex F(0) domain. This Salvelinus alpinus (Arctic char) protein is ATP synthase F(0) complex subunit 8.